Reading from the N-terminus, the 163-residue chain is MLTVSLLVCAMMALTQANDDKILKGTATEAGPVSQRAPPNCPAGWQPLGDRCIYYETTAMTWALAETNCMKLGGHLASIHSQEEHSFIQTLNAGVVWIGGSACLQAGAWTWSDGTPMNFRSWCSTKPDDVLAACCMQMTAAADQCWDDLPCPASHKSVCAMTF.

Residues 1–17 (MLTVSLLVCAMMALTQA) form the signal peptide. A propeptide spanning residues 18-34 (NDDKILKGTATEAGPVS) is cleaved from the precursor. Residues 39 to 163 (PNCPAGWQPL…SHKSVCAMTF (125 aa)) form the C-type lectin domain. 5 disulfide bridges follow: Cys-41/Cys-52, Cys-69/Cys-159, Cys-103/Cys-134, Cys-123/Cys-145, and Cys-135/Cys-151.

In terms of processing, the N-terminus is blocked.

The protein resides in the secreted. In terms of biological role, antifreeze proteins lower the blood freezing point. The protein is Type-2 ice-structuring protein of Hemitripterus americanus (Sea raven).